Consider the following 55-residue polypeptide: uncharacterized protein (55 aa).

2 helical membrane passes run 5–25 (LISI…MMHM) and 26–46 (LPLY…LYRL).

The protein resides in the cell membrane. This is an uncharacterized protein from Bacillus subtilis (strain 168).